Reading from the N-terminus, the 185-residue chain is ATP synthase subunit b, chloroplastic (185 aa).

A helical transmembrane segment spans residues 27 to 49; it reads LATNPINLSVVLGVLIFFGKGVL.

It belongs to the ATPase B chain family. As to quaternary structure, F-type ATPases have 2 components, F(1) - the catalytic core - and F(0) - the membrane proton channel. F(1) has five subunits: alpha(3), beta(3), gamma(1), delta(1), epsilon(1). F(0) has four main subunits: a(1), b(1), b'(1) and c(10-14). The alpha and beta chains form an alternating ring which encloses part of the gamma chain. F(1) is attached to F(0) by a central stalk formed by the gamma and epsilon chains, while a peripheral stalk is formed by the delta, b and b' chains.

It is found in the plastid. Its subcellular location is the chloroplast thylakoid membrane. F(1)F(0) ATP synthase produces ATP from ADP in the presence of a proton or sodium gradient. F-type ATPases consist of two structural domains, F(1) containing the extramembraneous catalytic core and F(0) containing the membrane proton channel, linked together by a central stalk and a peripheral stalk. During catalysis, ATP synthesis in the catalytic domain of F(1) is coupled via a rotary mechanism of the central stalk subunits to proton translocation. In terms of biological role, component of the F(0) channel, it forms part of the peripheral stalk, linking F(1) to F(0). The polypeptide is ATP synthase subunit b, chloroplastic (Vitis vinifera (Grape)).